Consider the following 96-residue polypeptide: Small ribosomal subunit protein bS6 (96 aa).

Belongs to the bacterial ribosomal protein bS6 family.

Functionally, binds together with bS18 to 16S ribosomal RNA. This is Small ribosomal subunit protein bS6 from Corynebacterium aurimucosum (strain ATCC 700975 / DSM 44827 / CIP 107346 / CN-1) (Corynebacterium nigricans).